The chain runs to 430 residues: Tol-Pal system protein TolB (430 aa).

Positions 1 to 21 (MKQAFRVALGFFLLWASVLHA) are cleaved as a signal peptide.

This sequence belongs to the TolB family. The Tol-Pal system is composed of five core proteins: the inner membrane proteins TolA, TolQ and TolR, the periplasmic protein TolB and the outer membrane protein Pal. They form a network linking the inner and outer membranes and the peptidoglycan layer.

It is found in the periplasm. Part of the Tol-Pal system, which plays a role in outer membrane invagination during cell division and is important for maintaining outer membrane integrity. TolB occupies a key intermediary position in the Tol-Pal system because it communicates directly with both membrane-embedded components, Pal in the outer membrane and TolA in the inner membrane. The protein is Tol-Pal system protein TolB of Sodalis glossinidius (strain morsitans).